The chain runs to 548 residues: Kinetochore and Eb1-associated basic protein (548 aa).

Disordered regions lie at residues Met-1–Pro-51 and Tyr-82–Lys-181. Composition is skewed to basic and acidic residues over residues Arg-20–Arg-29, Arg-104–Ser-116, and Pro-127–Ser-141. The segment at Gln-100–Lys-253 is important for kinetochore and microtubule localization. Over residues Gln-144–Arg-155 the composition is skewed to polar residues. The short motif at Thr-149–Pro-152 is the SXIP motif 1 element. The segment covering Asn-156 to Lys-165 has biased composition (basic and acidic residues). Residues Ser-166–Pro-175 show a composition bias toward polar residues. The SXIP motif 2 motif lies at Thr-168 to Pro-171. The interval Ser-237 to Lys-372 is CH (calponin-homology)-like region, which is not required for kinetochore and microtubule localization. The stretch at Tyr-386–Glu-457 forms a coiled coil.

In terms of assembly, interacts with Eb1 via the two SxIP motifs; the interaction is not required for kebab kinetochore localization.

The protein localises to the cytoplasm. The protein resides in the perinuclear region. It is found in the chromosome. Its subcellular location is the centromere. It localises to the kinetochore. The protein localises to the cytoskeleton. The protein resides in the spindle. This Drosophila melanogaster (Fruit fly) protein is Kinetochore and Eb1-associated basic protein.